Reading from the N-terminus, the 352-residue chain is Protein NDRG4 (352 aa).

Phosphoserine is present on residues Lys293, Ser298, Ser317, and Ser323. The disordered stretch occupies residues 301-352 (AVPSASMTRLARSRTASLTSASSVDGSRPQPCAHSDSSEGMGQVNHTMEVSC). The segment covering 308 to 323 (TRLARSRTASLTSASS) has biased composition (low complexity). A compositionally biased stretch (polar residues) spans 338 to 352 (SEGMGQVNHTMEVSC).

It belongs to the NDRG family. Predominantly expressed in the brain (at protein level). Detected in neurons of various parts of brain, including the olfactory bulb, olfactory tuberculum, cerebral cortex, striatum, hippocampus, dentate gyrus, thalamus, hypothalamus, mesencephalon, cerebellum, pons and medulla oblongata.

The protein resides in the cytoplasm. The protein localises to the cytosol. In terms of biological role, contributes to the maintenance of intracerebral BDNF levels within the normal range, which is necessary for the preservation of spatial learning and the resistance to neuronal cell death caused by ischemic stress. May enhance growth factor-induced ERK1 and ERK2 phosphorylation. May attenuate NGF-promoted ELK1 phosphorylation in a microtubule-dependent manner. This Mus musculus (Mouse) protein is Protein NDRG4 (Ndrg4).